Consider the following 385-residue polypeptide: Ethanolamine kinase 2 (385 aa).

This sequence belongs to the choline/ethanolamine kinase family.

The enzyme catalyses ethanolamine + ATP = phosphoethanolamine + ADP + H(+). It functions in the pathway phospholipid metabolism; phosphatidylethanolamine biosynthesis; phosphatidylethanolamine from ethanolamine: step 1/3. Functionally, highly specific for ethanolamine phosphorylation. Does not have choline kinase activity. This is Ethanolamine kinase 2 (Etnk2) from Rattus norvegicus (Rat).